Reading from the N-terminus, the 235-residue chain is Cytochrome c-554 (235 aa).

The signal sequence occupies residues 1 to 24; sequence MKIMIACGLVAAALFTLTSGQSLA. 15 residues coordinate heme: Cys-35, Cys-38, His-39, His-51, Cys-84, Cys-87, His-88, Cys-112, Cys-115, His-116, His-126, Cys-158, Cys-161, His-162, and His-203. The segment at 121-144 is disordered; it reads NFRGDHRKSGQAFEKSGKKTPRKD.

Post-translationally, binds 4 heme groups per subunit.

It localises to the periplasm. In terms of biological role, involved in ammonia oxidation; accepts electrons directly from hydroxylamine oxidoreductase (HAO). This chain is Cytochrome c-554 (cycA1), found in Nitrosomonas europaea (strain ATCC 19718 / CIP 103999 / KCTC 2705 / NBRC 14298).